Here is a 221-residue protein sequence, read N- to C-terminus: Max dimerization protein 1 (221 aa).

A Nuclear localization signal motif is present at residues 21–49 (RREREAEHGYASMLPYNNKDRDALKRRNK). Disordered regions lie at residues 30-68 (YASMLPYNNKDRDALKRRNKSKKNNSSSRSTHNEMEKNR) and 173-204 (TGDLDWSSSSVSDSDERGSMQSLGSDEGYSST). The bHLH domain maps to 56 to 108 (SSRSTHNEMEKNRRAHLRLCLEKLKGLVPLGPESSRHTTLSLLTKAKLHIKKL). Residues 175–184 (DLDWSSSSVS) are compositionally biased toward low complexity. Residues 191–204 (SMQSLGSDEGYSST) show a composition bias toward polar residues.

In terms of assembly, heterodimer with MAX; the interaction is required for DNA-binding. DNA binding requires dimerization with another bHLH protein; does not form homodimers, and does not bind to DNA in the absence of MAX in vitro. Interacts with RNF17. Ubiquitinated by BIRC2/c-IAP1, leading to its subsequent degradation by the proteasome.

Its subcellular location is the nucleus. Functionally, component of a transcriptional repressor complex together with MAX. In complex with MAX binds to the core DNA sequence 5'-CAC[GA]TG-3'. Antagonizes MYC transcriptional activity by competing with MYC for MAX binding. Binds to the TERT promoter and represses telomerase expression, possibly by interfering with MYC binding. This chain is Max dimerization protein 1 (MXD1), found in Homo sapiens (Human).